The following is a 476-amino-acid chain: ATP synthase subunit beta (476 aa).

158 to 165 (GGAGVGKT) contacts ATP.

It belongs to the ATPase alpha/beta chains family. In terms of assembly, F-type ATPases have 2 components, CF(1) - the catalytic core - and CF(0) - the membrane proton channel. CF(1) has five subunits: alpha(3), beta(3), gamma(1), delta(1), epsilon(1). CF(0) has three main subunits: a(1), b(2) and c(9-12). The alpha and beta chains form an alternating ring which encloses part of the gamma chain. CF(1) is attached to CF(0) by a central stalk formed by the gamma and epsilon chains, while a peripheral stalk is formed by the delta and b chains.

The protein resides in the cell inner membrane. The enzyme catalyses ATP + H2O + 4 H(+)(in) = ADP + phosphate + 5 H(+)(out). Produces ATP from ADP in the presence of a proton gradient across the membrane. The catalytic sites are hosted primarily by the beta subunits. The chain is ATP synthase subunit beta from Paracidovorax citrulli (strain AAC00-1) (Acidovorax citrulli).